A 124-amino-acid polypeptide reads, in one-letter code: Putative membrane protein insertion efficiency factor (124 aa).

The span at 1-12 (MCPQPHADHAIT) shows a compositional bias: basic and acidic residues. The interval 1 to 26 (MCPQPHADHAITRGDTGAAGGRNWSG) is disordered.

Belongs to the UPF0161 family.

Its subcellular location is the cell inner membrane. Functionally, could be involved in insertion of integral membrane proteins into the membrane. This Rhizobium meliloti (strain 1021) (Ensifer meliloti) protein is Putative membrane protein insertion efficiency factor.